The chain runs to 254 residues: Geranylgeranylglyceryl phosphate synthase (254 aa).

Mg(2+) is bound by residues Asp-28 and Ser-53. Sn-glycerol 1-phosphate contacts are provided by residues 172-178 (YLEAGSG), 203-204 (GG), and 225-226 (GT).

Belongs to the GGGP/HepGP synthase family. Group II subfamily. It depends on Mg(2+) as a cofactor.

It localises to the cytoplasm. It catalyses the reaction sn-glycerol 1-phosphate + (2E,6E,10E)-geranylgeranyl diphosphate = sn-3-O-(geranylgeranyl)glycerol 1-phosphate + diphosphate. It functions in the pathway membrane lipid metabolism; glycerophospholipid metabolism. Its function is as follows. Prenyltransferase that catalyzes the transfer of the geranylgeranyl moiety of geranylgeranyl diphosphate (GGPP) to the C3 hydroxyl of sn-glycerol-1-phosphate (G1P). This reaction is the first ether-bond-formation step in the biosynthesis of archaeal membrane lipids. The chain is Geranylgeranylglyceryl phosphate synthase from Methanococcus vannielii (strain ATCC 35089 / DSM 1224 / JCM 13029 / OCM 148 / SB).